A 342-amino-acid polypeptide reads, in one-letter code: RNA 3'-terminal phosphate cyclase (342 aa).

ATP contacts are provided by residues Q103 and 283 to 287; that span reads YLADQ. The active-site Tele-AMP-histidine intermediate is H308.

Belongs to the RNA 3'-terminal cyclase family. Type 1 subfamily.

The protein resides in the cytoplasm. It catalyses the reaction a 3'-end 3'-phospho-ribonucleotide-RNA + ATP = a 3'-end 2',3'-cyclophospho-ribonucleotide-RNA + AMP + diphosphate. Catalyzes the conversion of 3'-phosphate to a 2',3'-cyclic phosphodiester at the end of RNA. The mechanism of action of the enzyme occurs in 3 steps: (A) adenylation of the enzyme by ATP; (B) transfer of adenylate to an RNA-N3'P to produce RNA-N3'PP5'A; (C) and attack of the adjacent 2'-hydroxyl on the 3'-phosphorus in the diester linkage to produce the cyclic end product. The biological role of this enzyme is unknown but it is likely to function in some aspects of cellular RNA processing. This Escherichia coli O157:H7 protein is RNA 3'-terminal phosphate cyclase (rtcA).